The sequence spans 484 residues: Arginine ADP-riboxanase OspC3 (484 aa).

NAD(+)-binding residues include histidine 143, glutamine 144, serine 145, asparagine 155, lysine 157, threonine 169, asparagine 172, and threonine 173. Residue glutamate 326 is part of the active site. 3 ANK repeats span residues 369–398 (MAHQALAYSLGNKKADIALYLLSKFNFTKQ), 413–444 (NLYDVEYLLSKDGANYKVLEYFINNGLVDVNK), and 451–480 (SGDTMLDNAMKSKDSKMIDFLLKNGAILGK).

This sequence belongs to the OspC family. In terms of assembly, interacts with host calmodulin (CALM1, CALM2 and/or CALM3); specifically interacts with the apo form of calmodulin, preventing calcium-binding.

It localises to the secreted. It is found in the host cytoplasm. It catalyses the reaction L-arginyl-[protein] + NAD(+) = ADP-riboxanated L-argininyl-[protein] + nicotinamide + NH4(+) + H(+). Its activity is regulated as follows. Interaction with host calmodulin (CALM1, CALM2 and/or CALM3) is required to mediate arginine ADP-riboxanation of host caspases. In terms of biological role, ADP-riboxanase effector that inhibits host cell pyroptosis. Acts by mediating arginine ADP-riboxanation of host CASP4/CASP11, blocking CASP4/CASP11 autoprocessing. This prevents CASP4 activation and ability to recognize and cleave GSDMD, thereby inhibiting LPS-induced pyroptosis. ADP-riboxanation takes place in two steps: OspC3 first catalyzes ADP-ribosylation of target Arg, and then initiates a deamination to remove one N-omega group. Independently of its ADP-riboxanase activity, acts as an inhibitor of calcium signaling by inhibiting host calmodulin, preventing activation of the JAK-STAT signaling pathway in response to interferon-beta. Mechanistically, acts by binding to the apo form of calmodulin, preventing calcium-binding and ability to activate host CaMK2 (CAMKII), which is required to stimulate the JAK-STAT signaling pathway in response to interferon-beta. This is Arginine ADP-riboxanase OspC3 from Shigella flexneri.